The sequence spans 68 residues: Large ribosomal subunit protein uL29 (68 aa).

Belongs to the universal ribosomal protein uL29 family.

This chain is Large ribosomal subunit protein uL29, found in Streptococcus sanguinis (strain SK36).